The chain runs to 989 residues: DNA-directed RNA polymerase subunit beta' (989 aa).

Mg(2+) contacts are provided by aspartate 383, aspartate 385, and aspartate 387.

This sequence belongs to the RNA polymerase beta' chain family. The RNAP catalytic core consists of 2 alpha, 1 beta, 1 beta' and 1 omega subunit. When a sigma factor is associated with the core the holoenzyme is formed, which can initiate transcription. The cofactor is Mg(2+).

It catalyses the reaction RNA(n) + a ribonucleoside 5'-triphosphate = RNA(n+1) + diphosphate. Its function is as follows. DNA-dependent RNA polymerase catalyzes the transcription of DNA into RNA using the four ribonucleoside triphosphates as substrates. This is DNA-directed RNA polymerase subunit beta' (rpoC) from Leuconostoc pseudomesenteroides.